The chain runs to 135 residues: UPF0102 protein Aave_0630 (135 aa).

The segment at 1–21 is disordered; that stretch reads MGILEKKTAGPGGAARKTTTR.

Belongs to the UPF0102 family.

The polypeptide is UPF0102 protein Aave_0630 (Paracidovorax citrulli (strain AAC00-1) (Acidovorax citrulli)).